A 356-amino-acid chain; its full sequence is Dihydroorotate dehydrogenase (quinone) (356 aa).

FMN contacts are provided by residues 66-70 (AGFDK) and Thr90. Lys70 provides a ligand contact to substrate. Substrate is bound at residue 115-119 (NRMGF). FMN-binding residues include Asn143 and Asn176. Asn176 is a binding site for substrate. Residue Ser179 is the Nucleophile of the active site. Substrate is bound at residue Asn181. Residues Lys212 and Thr240 each coordinate FMN. 241-242 (NT) provides a ligand contact to substrate. FMN contacts are provided by residues Gly266, Gly295, and 316–317 (YT).

It belongs to the dihydroorotate dehydrogenase family. Type 2 subfamily. In terms of assembly, monomer. The cofactor is FMN.

The protein localises to the cell membrane. The catalysed reaction is (S)-dihydroorotate + a quinone = orotate + a quinol. It functions in the pathway pyrimidine metabolism; UMP biosynthesis via de novo pathway; orotate from (S)-dihydroorotate (quinone route): step 1/1. Catalyzes the conversion of dihydroorotate to orotate with quinone as electron acceptor. The chain is Dihydroorotate dehydrogenase (quinone) from Rhodococcus erythropolis (strain PR4 / NBRC 100887).